The sequence spans 262 residues: Matrilysin (262 aa).

Residues 1-12 (LCVLCLLPQSPA) form the signal peptide. A propeptide spans 13–89 (LPLPREAGGH…PRCGLPDTGE (77 aa)) (activation peptide). Residues 80–87 (PRCGLPDT) carry the Cysteine switch motif. Position 82 (C82) interacts with Zn(2+). D148 is a Ca(2+) binding site. Zn(2+)-binding residues include H158 and D160. Ca(2+) contacts are provided by D165, G166, G168, and T170. H173 is a binding site for Zn(2+). G180, G182, and D184 together coordinate Ca(2+). Residue H186 participates in Zn(2+) binding. The Ca(2+) site is built by D188 and E191. H209 contacts Zn(2+). E210 is an active-site residue. Zn(2+) is bound by residues H213 and H219.

Belongs to the peptidase M10A family. Ca(2+) serves as cofactor. It depends on Zn(2+) as a cofactor.

The protein resides in the secreted. It localises to the extracellular space. It is found in the extracellular matrix. The catalysed reaction is Cleavage of 14-Ala-|-Leu-15 and 16-Tyr-|-Leu-17 in B chain of insulin. No action on collagen types I, II, IV, V. Cleaves gelatin chain alpha2(I) &gt; alpha1(I).. In terms of biological role, degrades casein, gelatins of types I, III, IV, and V, and fibronectin. Activates procollagenase. The polypeptide is Matrilysin (MMP7) (Felis catus (Cat)).